The chain runs to 185 residues: Large ribosomal subunit protein uL22 (185 aa).

It belongs to the universal ribosomal protein uL22 family. Part of the 50S ribosomal subunit.

Functionally, this protein binds specifically to 23S rRNA. It makes multiple contacts with different domains of the 23S rRNA in the assembled 50S subunit and ribosome. Its function is as follows. The globular domain of the protein is located near the polypeptide exit tunnel on the outside of the subunit, while an extended beta-hairpin is found that lines the wall of the exit tunnel in the center of the 70S ribosome. The protein is Large ribosomal subunit protein uL22 of Pyrobaculum aerophilum (strain ATCC 51768 / DSM 7523 / JCM 9630 / CIP 104966 / NBRC 100827 / IM2).